Here is a 184-residue protein sequence, read N- to C-terminus: Large ribosomal subunit protein eL14 (184 aa).

Residues 149 to 184 are disordered; sequence KNAKKVDSTPAAKKRIEKARAARKAKPTAAKEKSKK. Basic residues predominate over residues 160–174; that stretch reads AKKRIEKARAARKAK.

This sequence belongs to the eukaryotic ribosomal protein eL14 family.

This chain is Large ribosomal subunit protein eL14, found in Trypanosoma congolense.